Here is a 424-residue protein sequence, read N- to C-terminus: UDP-N-acetylglucosamine 1-carboxyvinyltransferase (424 aa).

A phosphoenolpyruvate-binding site is contributed by 22–23; it reads KN. R93 contributes to the UDP-N-acetyl-alpha-D-glucosamine binding site. C117 serves as the catalytic Proton donor. C117 is subject to 2-(S-cysteinyl)pyruvic acid O-phosphothioketal. UDP-N-acetyl-alpha-D-glucosamine contacts are provided by residues 162-165, D307, and I329; that span reads KVSV.

This sequence belongs to the EPSP synthase family. MurA subfamily.

It localises to the cytoplasm. It catalyses the reaction phosphoenolpyruvate + UDP-N-acetyl-alpha-D-glucosamine = UDP-N-acetyl-3-O-(1-carboxyvinyl)-alpha-D-glucosamine + phosphate. The protein operates within cell wall biogenesis; peptidoglycan biosynthesis. Functionally, cell wall formation. Adds enolpyruvyl to UDP-N-acetylglucosamine. In Actinobacillus pleuropneumoniae serotype 7 (strain AP76), this protein is UDP-N-acetylglucosamine 1-carboxyvinyltransferase.